A 271-amino-acid polypeptide reads, in one-letter code: Keratin-associated protein 10-5 (271 aa).

A run of 22 repeats spans residues 26–30 (CCEPP), 51–55 (CCQAA), 73–77 (CCQPA), 78–82 (CCASS), 88–92 (CCVPV), 93–97 (CCKPV), 98–102 (CCLPT), 110–114 (CCQQS), 120–124 (CCASS), 130–134 (CCVPV), 135–139 (CCKPV), 140–144 (CCVPT), 152–156 (CCQHS), 162–166 (CCTSS), 177–181 (CCKPV), 187–191 (CCVPV), 199–203 (CCQQS), 209–213 (CCTTS), 214–218 (CCRPS), 233–237 (CCLPI), 240–244 (CCAPA), and 251–255 (CCRPA). A 22 X 5 AA repeats of C-C-X(3) region spans residues 26 to 255 (CCEPPCGTAP…SYQASCCRPA (230 aa)).

The protein belongs to the KRTAP type 10 family. As to quaternary structure, interacts with hair keratins. As to expression, restricted to a narrow region of the hair fiber cuticle, lying approximately 20 cell layers above the apex of the dermal papilla of the hair root; not detected in any other tissues.

Functionally, in the hair cortex, hair keratin intermediate filaments are embedded in an interfilamentous matrix, consisting of hair keratin-associated proteins (KRTAP), which are essential for the formation of a rigid and resistant hair shaft through their extensive disulfide bond cross-linking with abundant cysteine residues of hair keratins. The matrix proteins include the high-sulfur and high-glycine-tyrosine keratins. The sequence is that of Keratin-associated protein 10-5 (KRTAP10-5) from Homo sapiens (Human).